Reading from the N-terminus, the 184-residue chain is NADH-quinone oxidoreductase subunit B (184 aa).

Positions 63, 64, 128, and 158 each coordinate [4Fe-4S] cluster.

The protein belongs to the complex I 20 kDa subunit family. NDH-1 is composed of 14 different subunits. Subunits NuoB, C, D, E, F, and G constitute the peripheral sector of the complex. [4Fe-4S] cluster is required as a cofactor.

The protein resides in the cell inner membrane. The enzyme catalyses a quinone + NADH + 5 H(+)(in) = a quinol + NAD(+) + 4 H(+)(out). Its function is as follows. NDH-1 shuttles electrons from NADH, via FMN and iron-sulfur (Fe-S) centers, to quinones in the respiratory chain. Couples the redox reaction to proton translocation (for every two electrons transferred, four hydrogen ions are translocated across the cytoplasmic membrane), and thus conserves the redox energy in a proton gradient. In Stenotrophomonas maltophilia (strain R551-3), this protein is NADH-quinone oxidoreductase subunit B.